Here is a 318-residue protein sequence, read N- to C-terminus: N-acetyl-gamma-glutamyl-phosphate reductase (318 aa).

Cysteine 132 is an active-site residue.

Belongs to the NAGSA dehydrogenase family. Type 1 subfamily.

The protein localises to the cytoplasm. The enzyme catalyses N-acetyl-L-glutamate 5-semialdehyde + phosphate + NADP(+) = N-acetyl-L-glutamyl 5-phosphate + NADPH + H(+). It participates in amino-acid biosynthesis; L-arginine biosynthesis; N(2)-acetyl-L-ornithine from L-glutamate: step 3/4. In terms of biological role, catalyzes the NADPH-dependent reduction of N-acetyl-5-glutamyl phosphate to yield N-acetyl-L-glutamate 5-semialdehyde. The chain is N-acetyl-gamma-glutamyl-phosphate reductase from Azobacteroides pseudotrichonymphae genomovar. CFP2.